Reading from the N-terminus, the 348-residue chain is Mitogen-activated protein kinase kinase 5 (348 aa).

Disordered stretches follow at residues 1 to 26 and 35 to 54; these read MKPI…DLSL and LAVP…PASS. Residue serine 6 is modified to Phosphoserine; by ASK7. In terms of domain architecture, Protein kinase spans 70 to 325; the sequence is LERVNRIGSG…AQQLLQHPFI (256 aa). Residues 76–84 and lysine 99 each bind ATP; that span reads IGSGAGGTV. Aspartate 187 acts as the Proton acceptor in catalysis. Threonine 215 bears the Phosphothreonine mark. A Phosphoserine; by ASK7 modification is found at serine 221. At serine 221 the chain carries Phosphoserine. The residue at position 225 (threonine 225) is a Phosphothreonine; by ASK7. ADP-ribosylarginine; by HopF2 is present on arginine 313.

It belongs to the protein kinase superfamily. STE Ser/Thr protein kinase family. MAP kinase kinase subfamily. As to quaternary structure, interacts with P.syringae type III effector HopF2. Interacts with BZR1. Interacts with MPK6 and MPK3. Interacts with RACK1A, RACK1B and RACK1C. Interacts with MAPKKK5 mainly in the cytosol. Binds to BASL. Interacts with MAPKKK20. Post-translationally, phosphorylation at Thr-215 and Ser-221 by MAP kinase kinase kinases positively regulates kinase activity. Phosphorylated by MAPKKK5 and MAPKKK20 in response to abscisic acid (ABA). In terms of processing, ADP-ribosylation at Arg-313 by P.syringae type III effector HopF2 reduces the ability of the protein to phosphorylate downstream MPK6. Expressed higher in stems and leaves than in flowers and roots.

The enzyme catalyses L-seryl-[protein] + ATP = O-phospho-L-seryl-[protein] + ADP + H(+). The catalysed reaction is L-threonyl-[protein] + ATP = O-phospho-L-threonyl-[protein] + ADP + H(+). It carries out the reaction L-tyrosyl-[protein] + ATP = O-phospho-L-tyrosyl-[protein] + ADP + H(+). With respect to regulation, activated through serine and threonine phosphorylation by MEKK1 and MAPKKK20 in response to abscisic acid (ABA). Inhibited through phosphorylation by GSK3/Shaggy-like kinase ASKs. Inhibited through ADP-Ribosylation by P.syringae HopF2. Activated after high light stress. Its function is as follows. Mitogen-activated protein kinase kinase (MAPKK) which regulates abscisic acid (ABA) responses in a MAPKKK20-MKK5-MPK6 cascade involved in root growth (e.g. root cell division and elongation) and stomatal response, probably via MAPK6 activation by protein phosphorylation. Involved in the second phase of hydrogen peroxide generation during hypersensitive response-like cell death. Involved in the innate immune MAP kinase signaling cascade (MEKK1, MKK4/MKK5 and MPK3/MPK6) downstream of bacterial flagellin receptor FLS2. Activates by phosphorylation the downstream MPK3 and MPK6. YDA-MKK4/MKK5-MPK3/MPK6 module regulates stomatal cell fate before the guard mother cell (GMC) is specified. This MAPK cascade also functions downstream of the ER receptor in regulating coordinated local cell proliferation, which shapes the morphology of plant organs. MKK4 and MKK5 participate in the regulation of floral organ abscission. Target of the Pseudomonas syringae type III effector HopF2, that inhibits the activation of the downstream MPK6 and PAMP-triggered immunity. Plays a critical role in high light stress tolerance by the mediation of the Cu/Zn SODs CSD1 and CSD2 gene expression. Phosphorylates BZR1 in vitro. The protein is Mitogen-activated protein kinase kinase 5 of Arabidopsis thaliana (Mouse-ear cress).